The chain runs to 303 residues: tRNA pseudouridine synthase B (303 aa).

The Nucleophile role is filled by Asp47.

This sequence belongs to the pseudouridine synthase TruB family. Type 1 subfamily.

It catalyses the reaction uridine(55) in tRNA = pseudouridine(55) in tRNA. Responsible for synthesis of pseudouridine from uracil-55 in the psi GC loop of transfer RNAs. This Roseobacter denitrificans (strain ATCC 33942 / OCh 114) (Erythrobacter sp. (strain OCh 114)) protein is tRNA pseudouridine synthase B.